Consider the following 350-residue polypeptide: RING finger protein 44 (350 aa).

The RING-type; atypical zinc finger occupies C298 to R339.

In Rattus norvegicus (Rat), this protein is RING finger protein 44 (Rnf44).